Reading from the N-terminus, the 76-residue chain is uncharacterized protein (76 aa).

EF-hand domains lie at 9–44 and 43–76; these read EMDE…LGEN and ENLT…IHIS.

Its subcellular location is the cytoplasm. It is found in the nucleus. This is an uncharacterized protein from Schizosaccharomyces pombe (strain 972 / ATCC 24843) (Fission yeast).